A 201-amino-acid polypeptide reads, in one-letter code: Transmembrane 4 L6 family member 18 (201 aa).

At 1-9 (MGSRKCGGC) the chain is on the cytoplasmic side. Residues 10–30 (LSCLLIPLALWSIIVNILLYF) form a helical membrane-spanning segment. The Extracellular portion of the chain corresponds to 31-49 (PNGQTSYASSNKLTNYVWY). Residues 50–70 (FEGICFSGIMMLIVTTVLLVL) traverse the membrane as a helical segment. Topologically, residues 71–93 (ENNNNYKCCQSENCSKKYVTLLS) are cytoplasmic. The helical transmembrane segment at 94 to 114 (IIFSSLGIAFSGYCLVISALG) threads the bilayer. Residues 115–157 (LVQGPYCRTLDGWEYAFEGTAGRFLTDSSIWIQCLEPAHVVEW) lie on the Extracellular side of the membrane. A helical transmembrane segment spans residues 158 to 178 (NIILFSILITLSGLQVIICLI). The Cytoplasmic portion of the chain corresponds to 179 to 201 (RVVMQLSKILCGSYSVIFQPGII).

The protein belongs to the L6 tetraspanin family.

It localises to the membrane. This is Transmembrane 4 L6 family member 18 (TM4SF18) from Homo sapiens (Human).